The primary structure comprises 1394 residues: MSISKYFTPVADGSLTFNGANIQFGADAQGESKKSYDAEDSMPNPANQLNDITFQAEAGEMVLVLGYPTSTLFKTLFHGKTSLSYSPPGSIKFKNNEFKSFSEKCPHQIIYNNEQDVHFPFLTVEQTIDFALSCKFDIPKGERDQIRNELLREFGLSHVLKTIVGNDFFRGVSGGERKRISIIETFIANGSVYLWDNSTKGLDSATALDFLEILRKMAKATRSVNLVRISQASDKIVDKFDKILMLSDSYQLFYGTVDECLTYFRDTLGIEKDPNDCIIEYLTSILNFQFKNKNLGNLSNSSSASVLKTATGEVTKYTYNSDFDLYDQWKHSSYYRNIKQQIQGSSIDDSIKEVDPSDVSPIFNIPLKKQLLFCTKRAFQRSLGDKAYMTAQFISVVIQSLVIGSLFYEIPLTTIGSYSRGSLTFFSILFFTFLSLADMPIAFQRQPVVKKQSQLHFYTNWVETLSTTVFDYCFKLCLVIVFSIILYFLAHLQYKAARFFIFLLFLSFYNFCMVSLFALTTLVAPTISVANLFAGILLLAIAMYASYVIYLKNMHPWFVWIAYLNPAMYAMEAILSNELYNLKLDCSETIVPRGPTYNDVPFSHKACAWQGATLGNDYVRGRDYLKQGLSYTYHHVWRNFGIIIGFLVFFIACTLFASQYIKPYFNKDEIERNNSRLTRWLPFLNKKRGTRSSARNDSKYVGIPKSHSVSSSSSSLSAVPYQISPSNKEMALNDYNEQPITETVETQKHIISWKNINYTVGTKKLINNASGFISSGLTALMGESGAGKTTLLNVLSQRVETGVVSGEILIDGHPLTDEDAFKRSIGFVQQQDLHLDLLSVKESLEISCLLRGDGDRAYLDTVSNLLKLPSDILVADLNPTQRKLLSIGVELVTKPSLLLFLDEPTSGLDAEAALTIVKFLKQLSLQGQAIFCTIHQPSKSVISHFDNIFLLKRGGECVFFGPMDDACGYFMSHDNTLVYDKEHDNPADFVIDAVGNSNSSAGKDTAEEALTLNKEAIDWSALWESSVEKKLVKKETARLEDDARASGVDYTTSLWKQPSYLQQLALITRRQYICTKRDMTYVMAKYCLNGGAGLFIGFSFWHIKHNIIGLQDSIFFCFMALCVSSPLINQIQDKALKTKEVYVAREARSNTYHWTVLLLSQSIIELPLALTSSTLFFVCAFFSCGFNNAGWSAGVFFLNYMLFAAYYSTLGLWLIYTAPNLQTAAVFVAFIYSFTASFCGVMQPYSLFPTFWKFMYRVSPYTYFVETFVSILLHNWEIKCDMSEMVPGQPLTGQSCGQFMEAFIEEYGGYLHNKNTFTVCAYCTYTVGDDFLKNENMSYDHVWRNFGIEWAFVGFNFFAMFAGYYLTYVARIWPKVFKIITKVIPHRGKKPVQN.

Topologically, residues 1–420 (MSISKYFTPV…PLTTIGSYSR (420 aa)) are cytoplasmic. The ABC transporter 1 domain maps to 33–273 (KKSYDAEDSM…FRDTLGIEKD (241 aa)). The next 6 helical transmembrane spans lie at 421–443 (GSLT…PIAF), 468–490 (TVFD…YFLA), 497–519 (ARFF…LFAL), 529–551 (VANL…VIYL), 558–575 (FVWI…EAIL), and 636–658 (VWRN…LFAS). Residues 659-1080 (QYIKPYFNKD…QYICTKRDMT (422 aa)) are Cytoplasmic-facing. Residues 751–978 (ISWKNINYTV…YFMSHDNTLV (228 aa)) form the ABC transporter 2 domain. 782–789 (GESGAGKT) contributes to the ATP binding site. The next 6 helical transmembrane spans lie at 1081–1103 (YVMA…FWHI), 1107–1129 (IIGL…PLIN), 1156–1178 (VLLL…LFFV), 1193–1215 (AGVF…LWLI), 1224–1246 (AAVF…QPYS), and 1346–1368 (FGIE…YLTY). Topologically, residues 1369 to 1394 (VARIWPKVFKIITKVIPHRGKKPVQN) are cytoplasmic.

It belongs to the ABC transporter superfamily. ABCG family. PDR (TC 3.A.1.205) subfamily.

It localises to the membrane. In terms of biological role, transporter involved in the uptake of sterol. The sequence is that of ATP-dependent permease AUS1 (AUS1) from Saccharomyces cerevisiae (strain ATCC 204508 / S288c) (Baker's yeast).